We begin with the raw amino-acid sequence, 708 residues long: MLSVRISARQCSVRGLATQANNVSQPAKDNATNGSDAATEKKGTARYQRIQPSVALNSLKTKLSNDFQKQQPAQKIYSQFQSDLQQLISEQQVNPRHFVNSSICNSVLAKLILQSKSELDGQSIGESASIPPTPFEILETYLKYNLARHQHFIIVLKQFLIDLQPKEAINLWISFLEHAKQMPLNNTGTSQVQALTSIAYLMLSKESNSAPDVNVLTQLLNITPSKVPFLAIEQEIKSLGLTATTKDELLKSFDDLLLQWFTADKDAFINEFLKNSNDLKLITYLWKQYLKLATKDFTTSNQEIPGAFMIKLAQLDRSLDAVKIMTQLKEASADFKPSVSLYNSLLQTVAYIPAFGKEAQSIKLNRIQAIWNSYIKSSGNITVASYKAMLEALIIAGHFKTVESFWTLDVPDDVKANSEISDIYLKNFFASVKKVHFSQLKSKIPSKVHNLELANTILLAMVHSDASVGDIDSFYSHTFQSTEGIKPNDKTLAIKLRANLAAFGDSKNESILGTIGLSANSPTATLVIEEFLKICENEESATALLKALNIDNKSNDSAKKVSNFLDYYLQHGNWEYAEELFKKYLTDNVKSPSSVNYRLFNSMFKGFSELSITRNDTGFVSKQQVYWELCQRIHNRIFNECVISTLKSVSALSRRNAEFSENELDFINNTVLPYLVKLKIENSFKLQNPKYLQNMKSNDKIHIPKELL.

The N-terminal 15 residues, 1 to 15 (MLSVRISARQCSVRG), are a transit peptide targeting the mitochondrion. Residues 19–36 (QANNVSQPAKDNATNGSD) are compositionally biased toward polar residues. A disordered region spans residues 19 to 44 (QANNVSQPAKDNATNGSDAATEKKGT).

It localises to the mitochondrion. In terms of biological role, may be involved in the control of meiotic sister-chromatid recombination. This Kluyveromyces lactis (strain ATCC 8585 / CBS 2359 / DSM 70799 / NBRC 1267 / NRRL Y-1140 / WM37) (Yeast) protein is Meiotic sister-chromatid recombination protein 6, mitochondrial (MSC6).